Here is a 147-residue protein sequence, read N- to C-terminus: Large ribosomal subunit protein uL11 (147 aa).

It belongs to the universal ribosomal protein uL11 family. As to quaternary structure, part of the ribosomal stalk of the 50S ribosomal subunit. Interacts with L10 and the large rRNA to form the base of the stalk. L10 forms an elongated spine to which L12 dimers bind in a sequential fashion forming a multimeric L10(L12)X complex. One or more lysine residues are methylated.

Functionally, forms part of the ribosomal stalk which helps the ribosome interact with GTP-bound translation factors. This is Large ribosomal subunit protein uL11 from Parabacteroides distasonis (strain ATCC 8503 / DSM 20701 / CIP 104284 / JCM 5825 / NCTC 11152).